A 348-amino-acid chain; its full sequence is Malyl-CoA/beta-methylmalyl-CoA/citramalyl-CoA lyase (348 aa).

Substrate contacts are provided by residues 32–33, Lys-40, and Arg-92; that span reads HF. Mg(2+)-binding residues include Glu-157 and Asp-184. Substrate is bound by residues 183-184 and Leu-274; that span reads AD.

The protein belongs to the HpcH/HpaI aldolase family. As to quaternary structure, homohexamer. Dimer of trimers. It depends on Mg(2+) as a cofactor. Mn(2+) is required as a cofactor.

It carries out the reaction (S)-malyl-CoA = glyoxylate + acetyl-CoA. The enzyme catalyses (2R,3S)-beta-methylmalyl-CoA = propanoyl-CoA + glyoxylate. The catalysed reaction is (3S)-citramalyl-CoA = pyruvate + acetyl-CoA. With respect to regulation, inhibited by oxalate. Functionally, involved in the 3-hydroxypropionate cycle used for autotrophic carbon dioxide fixation, and in the glyoxylate assimilation cycle used to regenerate acetyl-CoA and produce pyruvate as universal precursor for biosynthesis. As a part of the 3-hydroxypropionate cycle, it catalyzes the cleavage of (S)-malyl-CoA to yield acetyl-CoA and glyoxylate. As part of the glyoxylate assimilation cycle, it catalyzes the condensation of glyoxylate with propionyl-CoA to yield (2R,3S)-beta-methylmalyl-CoA, and catalyzes the cleavage of (S)-citramalyl-CoA to yield acetyl-CoA and pyruvate. In Chloroflexus aurantiacus, this protein is Malyl-CoA/beta-methylmalyl-CoA/citramalyl-CoA lyase (mcl).